We begin with the raw amino-acid sequence, 923 residues long: MDYSSTINLPKTAFPMKAGLKEKEPKIIKKWEEEKLYQQLRELRKGAPKCILHDGPPYANGDIHIGTSLNKIIKDIIVRYKSAKGFDSPYVPGWDCHGMPIELKVQESLGDKYKETSKFIMRKKCRAYAQKYIDIQRKEFKRLGVMGDWENPYLTMSPEYESEIVEVFAQLVEKGYIYKGLRTIHWCMDCETALAAAEIEYDDNHTSTSVYVRFPVLNKINDKLDGNVDVMIWTTTPWTLPSNMACAFNRDLEYVAVEIDGRYAIMTTSLVDTVLSKKDMKAEGRDMIPVSMEDIEKLEIAHPFIKDRKSAVVFADYVEATAGTGIVHTAPGHGMEDYQTGMNYGLEIYCPVDKAGRYTSDFPEMQGMKVRDANPKVVEILENNGSLYHKEKVTHSYPICWRCKNPLIFRATSQWFMNMTHDDIDKRTVKALDNIKWYPTWGHDRMQKMLENRPDWCLSRQRSWGVPIPAFYCKNCGKTLLTAESTRHFAEIVKTKGMDVWFELEAKDLLPEGTKCECGSTDFDKEQDILDVWFDSGVSSFAAQKTNKDLDGVFPVDIYLEGGDQYRGWFQAAIWPSMAIRGIPPYKELVTHGWTLDEQGRAMHKSAGNVVSPLEVIDKYGADILRLWCISEDFTHNARVGDNMMKAIADNYRKIRNTFRYLLGNISDFDFTKEKIEVKDLLPVDRYALSRLHSFIKVAEKACDGYEFHLFYQRLINYCVVELSATYFDIIKDRLYCDRKDSVSRRSAQTVLVEILDVLVKLIAPVLPFTTDEVWGYYKGENASSVHLELYPKADDNLIDLELEKEWTSILKVRDDVLLSLERARDNSTIGKSLEAYVTICTKEPATKELLTKYEKYLNEIFIVSKVTLSDSKDDTFIEGGVSFVKTEKASHEKCVRCWGHYDSVGTDSEHKELCTRCAEAVR.

Positions 57 to 67 match the 'HIGH' region motif; sequence PYANGDIHIGT. Glu561 is an L-isoleucyl-5'-AMP binding site. Positions 602–606 match the 'KMSKS' region motif; the sequence is AMHKS. Lys605 contributes to the ATP binding site. Zn(2+)-binding residues include Cys895, Cys898, Cys915, and Cys918.

This sequence belongs to the class-I aminoacyl-tRNA synthetase family. IleS type 1 subfamily. As to quaternary structure, monomer. Zn(2+) serves as cofactor.

It is found in the cytoplasm. The enzyme catalyses tRNA(Ile) + L-isoleucine + ATP = L-isoleucyl-tRNA(Ile) + AMP + diphosphate. In terms of biological role, catalyzes the attachment of isoleucine to tRNA(Ile). As IleRS can inadvertently accommodate and process structurally similar amino acids such as valine, to avoid such errors it has two additional distinct tRNA(Ile)-dependent editing activities. One activity is designated as 'pretransfer' editing and involves the hydrolysis of activated Val-AMP. The other activity is designated 'posttransfer' editing and involves deacylation of mischarged Val-tRNA(Ile). In Brachyspira hyodysenteriae (strain ATCC 49526 / WA1), this protein is Isoleucine--tRNA ligase.